The primary structure comprises 513 residues: MAKFEGYSEKQKSRQQYFVYPLLFQEYIYAFAHDYVLNGSEPVEIFGCNNKKFSSLLVKRLIIRMYQQNFWINSVNHPNQDRLLDHSNHFYSEFYSQILSEGFAIVVEIPFSLGQLSCPEEKEIPKFQNLRSIHSIFPFLEDKFLHLHYLSHIEIPYPIHFEILVQLLEYRIKDVPSLHLLRFFLNYYSNWNSLITSMKSIFLFSKENKRLSRFLYNSYVSEYEFFLLFLRKQSSCLRLTSSGTFLERIHFSRKMEHFGVMYPGFFRKTIWFFMDPLMHYVRYQRKVILASKGTLLFQKKWKSYLVNFSQYFFSFWTQPQRIRLNQLTNSCFDFLGYRSSVPINTFLVRNQMLENFFLIDTRMKKFDTTAPATPLIGSLSKAQFCTGSGHPISKPIWTDLSDWDILDRFGRICRNLFHYHSGSSKKRTLYRLKYILRLSCARTLARKHKSTVRTFMQRLGSVFLEEFFTEEEQVFSLMFAKTTHFSFHGSHSERIWYLDIIRIDDLVNPLTLN.

It belongs to the intron maturase 2 family. MatK subfamily.

The protein localises to the plastid. Its subcellular location is the chloroplast. Its function is as follows. Usually encoded in the trnK tRNA gene intron. Probably assists in splicing its own and other chloroplast group II introns. The polypeptide is Maturase K (Astrebla lappacea (Curly Mitchell grass)).